The sequence spans 1377 residues: DNA-directed RNA polymerase subunit beta' (1377 aa).

Residues Cys-60, Cys-62, Cys-75, and Cys-78 each contribute to the Zn(2+) site. Mg(2+) is bound by residues Asp-449, Asp-451, and Asp-453. Residues Cys-777, Cys-851, Cys-858, and Cys-861 each coordinate Zn(2+).

Belongs to the RNA polymerase beta' chain family. In terms of assembly, the RNAP catalytic core consists of 2 alpha, 1 beta, 1 beta' and 1 omega subunit. When a sigma factor is associated with the core the holoenzyme is formed, which can initiate transcription. The cofactor is Mg(2+). It depends on Zn(2+) as a cofactor.

It carries out the reaction RNA(n) + a ribonucleoside 5'-triphosphate = RNA(n+1) + diphosphate. Its function is as follows. DNA-dependent RNA polymerase catalyzes the transcription of DNA into RNA using the four ribonucleoside triphosphates as substrates. The protein is DNA-directed RNA polymerase subunit beta' of Borrelia hermsii (strain HS1 / DAH).